Reading from the N-terminus, the 195-residue chain is Interferon tau-5 (195 aa).

An N-terminal signal peptide occupies residues Met-1–Gly-23. 2 disulfides stabilise this stretch: Cys-24–Cys-122 and Cys-52–Cys-162.

Belongs to the alpha/beta interferon family. IFN-alphaII subfamily. As to expression, constitutively and exclusively expressed in the mononuclear cells of the extraembryonic trophectoderm.

The protein resides in the secreted. In terms of biological role, paracrine hormone primarily responsible for maternal recognition of pregnancy. Interacts with endometrial receptors, probably type I interferon receptors, and blocks estrogen receptor expression, preventing the estrogen-induced increase in oxytocin receptor expression in the endometrium. This results in the suppression of the pulsatile endometrial release of the luteolytic hormone prostaglandin F2-alpha, hindering the regression of the corpus luteum (luteolysis) and therefore a return to ovarian cyclicity. This, and a possible direct effect of IFN-tau on prostaglandin synthesis, leads in turn to continued ovarian progesterone secretion, which stimulates the secretion by the endometrium of the nutrients required for the growth of the conceptus. In summary, displays particularly high antiviral and antiproliferative potency concurrently with particular weak cytotoxicity, high antiluteolytic activity and immunomodulatory properties. In contrast with other IFNs, IFN-tau is not virally inducible. The polypeptide is Interferon tau-5 (IFNT5) (Ovis aries (Sheep)).